Consider the following 460-residue polypeptide: UDP-N-acetylmuramoylalanine--D-glutamate ligase (460 aa).

117–123 (GTNGKTT) is an ATP binding site.

Belongs to the MurCDEF family.

Its subcellular location is the cytoplasm. It catalyses the reaction UDP-N-acetyl-alpha-D-muramoyl-L-alanine + D-glutamate + ATP = UDP-N-acetyl-alpha-D-muramoyl-L-alanyl-D-glutamate + ADP + phosphate + H(+). The protein operates within cell wall biogenesis; peptidoglycan biosynthesis. In terms of biological role, cell wall formation. Catalyzes the addition of glutamate to the nucleotide precursor UDP-N-acetylmuramoyl-L-alanine (UMA). This chain is UDP-N-acetylmuramoylalanine--D-glutamate ligase, found in Prochlorococcus marinus (strain MIT 9313).